A 611-amino-acid chain; its full sequence is Oligoendopeptidase F homolog (611 aa).

A Zn(2+)-binding site is contributed by histidine 384. The active site involves glutamate 385. Zn(2+)-binding residues include histidine 388 and histidine 391.

This sequence belongs to the peptidase M3B family. The cofactor is Zn(2+).

The sequence is that of Oligoendopeptidase F homolog (pepF) from Mycoplasma pneumoniae (strain ATCC 29342 / M129 / Subtype 1) (Mycoplasmoides pneumoniae).